The following is an 89-amino-acid chain: Large ribosomal subunit protein eL34 (89 aa).

The disordered stretch occupies residues 45–71 (GIPRGRPVEMRKLPKTKKRPERPMPHL).

It belongs to the eukaryotic ribosomal protein eL34 family. Part of the 50S ribosomal subunit.

The protein is Large ribosomal subunit protein eL34 of Pyrococcus furiosus (strain ATCC 43587 / DSM 3638 / JCM 8422 / Vc1).